The sequence spans 276 residues: Secretagogin (276 aa).

EF-hand domains follow at residues 12-47, 58-93, 105-140, 149-184, 197-232, and 240-276; these read LDAAGFWQVWQRFDADEKGYIEEKELDAFFLHMLMK, NLHKVKQQFMTTQDASKDGRIRMKELAGMFLSEDEN, DSSVEFMQIWRKYDADSSGFISAAELRNFLRDLFLH, KLEEYTGTMMKIFDRNKDGRLDLNDLARILALQENF, ERKRDFEKIFAYYDVSKTGALEGPEVDGFVKDMMEL, and VDLDKFREILLRHCDVNKDGKIQKSELALCLGLKINP. Ca(2+) contacts are provided by D25, D27, Y31, E36, D71, S73, D75, R77, E82, D118, D120, S122, E129, D162, N164, D166, R168, D173, D210, S212, T214, E221, D254, N256, D258, K260, and E265.

In terms of tissue distribution, expressed at high levels in the pancreatic islets of Langerhans and to a much lesser extent in the gastrointestinal tract (stomach, small intestine and colon), the adrenal medulla and cortex and the thyroid C-cells. In the brain, the expression is restricted to distinct subtypes of neurons with highest expression in the molecular layer of the cerebellum (stellate and basket cells), in the anterior part of the pituitary gland, in the thalamus, in the hypothalamus and in a subgroup of neocortical neurons.

Its subcellular location is the cytoplasm. The protein localises to the secreted. The protein resides in the cytoplasmic vesicle. It localises to the secretory vesicle membrane. The chain is Secretagogin (SCGN) from Homo sapiens (Human).